Here is a 145-residue protein sequence, read N- to C-terminus: D-aminoacyl-tRNA deacylase (145 aa).

Residues 137 to 138 (GP) carry the Gly-cisPro motif, important for rejection of L-amino acids motif.

It belongs to the DTD family. In terms of assembly, homodimer.

Its subcellular location is the cytoplasm. The enzyme catalyses glycyl-tRNA(Ala) + H2O = tRNA(Ala) + glycine + H(+). It catalyses the reaction a D-aminoacyl-tRNA + H2O = a tRNA + a D-alpha-amino acid + H(+). In terms of biological role, an aminoacyl-tRNA editing enzyme that deacylates mischarged D-aminoacyl-tRNAs. Also deacylates mischarged glycyl-tRNA(Ala), protecting cells against glycine mischarging by AlaRS. Acts via tRNA-based rather than protein-based catalysis; rejects L-amino acids rather than detecting D-amino acids in the active site. By recycling D-aminoacyl-tRNA to D-amino acids and free tRNA molecules, this enzyme counteracts the toxicity associated with the formation of D-aminoacyl-tRNA entities in vivo and helps enforce protein L-homochirality. The chain is D-aminoacyl-tRNA deacylase from Pseudomonas savastanoi pv. phaseolicola (strain 1448A / Race 6) (Pseudomonas syringae pv. phaseolicola (strain 1448A / Race 6)).